We begin with the raw amino-acid sequence, 98 residues long: Putative pterin-4-alpha-carbinolamine dehydratase (98 aa).

Belongs to the pterin-4-alpha-carbinolamine dehydratase family.

The enzyme catalyses (4aS,6R)-4a-hydroxy-L-erythro-5,6,7,8-tetrahydrobiopterin = (6R)-L-erythro-6,7-dihydrobiopterin + H2O. This Mesorhizobium japonicum (strain LMG 29417 / CECT 9101 / MAFF 303099) (Mesorhizobium loti (strain MAFF 303099)) protein is Putative pterin-4-alpha-carbinolamine dehydratase.